The primary structure comprises 493 residues: Calcium-binding tyrosine phosphorylation-regulated protein (493 aa).

An RIIa domain is found at Y12–G49. Disordered stretches follow at residues E85 to E164, D244 to P271, N330 to G354, and I426 to E493. Polar residues predominate over residues S90–E100. The segment covering K101–D117 has biased composition (basic and acidic residues). A compositionally biased stretch (low complexity) spans S141–P152. Residue T151 is modified to Phosphothreonine. Residue S155 is modified to Phosphoserine. 2 stretches are compositionally biased toward polar residues: residues I426 to P442 and S461 to G470. Acidic residues predominate over residues I484 to E493.

Interacts with FSCB. Isoform 3 self-associates. Isoform 3 and isoform 5 interact with GSK3B. Isoform 1 does not interact with GSK3B. In terms of processing, isoform 1 is phosphorylated on tyrosine residues during in vitro capacitation. Isoform 3 and isoform 5 are phosphorylated by GSK3B in vitro. Dephosphorylation affects its ability to bind calcium. As to expression, expressed in elongating spermatids and spermatozoa (at protein level). Isoform 1 is expressed in testis. Isoform 3 and isoform 5 are also expressed in brain, pancreas and numerous brain tumors.

It is found in the cytoplasm. Its subcellular location is the cytoskeleton. It localises to the cell projection. The protein resides in the cilium. The protein localises to the flagellum. It is found in the nucleus. Its function is as follows. May function as a regulator of both motility- and head-associated functions such as capacitation and the acrosome reaction. Isoform 1 binds calcium in vitro. Isoform 2 and isoform 6 probably bind calcium. Isoform 3 and isoform 5 do not bind calcium in vitro. Isoform 4 probably does not bind calcium. This chain is Calcium-binding tyrosine phosphorylation-regulated protein (CABYR), found in Homo sapiens (Human).